The following is a 440-amino-acid chain: G-protein coupled receptor family C group 5 member C (440 aa).

The signal sequence occupies residues 1–22 (MATHRTLLMCLGLPLFFPGALA). Over 23 to 49 (QNHAPPGCSPDLDPLYYNLCDRSGAWG) the chain is Extracellular. A helical transmembrane segment spans residues 50–70 (IVSEAVAGAGIITTFVLTIIL). At 71–84 (VASLPFVQDTKKRS) the chain is on the cytoplasmic side. The helical transmembrane segment at 85 to 105 (LLGTQVFFLLGTLGLFCLVFA) threads the bilayer. The Extracellular segment spans residues 106–119 (CVVKPDFSTCASRR). A helical membrane pass occupies residues 120–140 (FLFGVLFAICFSCLVAHVLSL). Residues 141–155 (NFLTRKNHGPRGWVI) lie on the Cytoplasmic side of the membrane. The chain crosses the membrane as a helical span at residues 156–176 (FTVALLLTLVEVIINTEWLII). At 177–207 (TLVRGGGQVSPLGNVSADSTMTSPCAIANMD) the chain is on the extracellular side. Asn-190 carries N-linked (GlcNAc...) asparagine glycosylation. The helical transmembrane segment at 208 to 228 (FVMALIYVMLLLLTAFLGAWP) threads the bilayer. Residues 229 to 240 (TLCGRFKRWRKH) are Cytoplasmic-facing. A helical transmembrane segment spans residues 241–261 (GVFVLLTTVISIAIWVVWIVM). Residues 262-278 (YTYGNEQHHSPTWDDPT) are Extracellular-facing. A helical transmembrane segment spans residues 279-299 (LAIALAANAWTFVLFYVIPEV). Over 300–440 (SQVTKPSPEQ…QVFRNPYVWD (141 aa)) the chain is Cytoplasmic. Ser-343, Ser-382, Ser-402, and Ser-405 each carry phosphoserine. Tyr-413 is subject to Phosphotyrosine. The residue at position 422 (Thr-422) is a Phosphothreonine.

Belongs to the G-protein coupled receptor 3 family.

It localises to the cell membrane. This retinoic acid-inducible G-protein coupled receptor provide evidence for a possible interaction between retinoid and G-protein signaling pathways. This Mus musculus (Mouse) protein is G-protein coupled receptor family C group 5 member C (Gprc5c).